The sequence spans 102 residues: 10 kDa heat shock protein, mitochondrial (102 aa).

The residue at position 2 (Ala2) is an N-acetylalanine. Lys8 carries the post-translational modification N6-acetyllysine. Position 28 is an N6-succinyllysine (Lys28). Lys40 is subject to N6-acetyllysine; alternate. An N6-malonyllysine; alternate mark is found at Lys40, Lys54, and Lys56. Residues Lys40, Lys54, and Lys56 each carry the N6-succinyllysine; alternate modification. Residue Lys56 is modified to N6-acetyllysine; alternate. Residue Ser57 is modified to Phosphoserine. Residues Lys66 and Lys70 each carry the N6-acetyllysine; alternate modification. Residues Lys66 and Lys70 each carry the N6-succinyllysine; alternate modification. A Phosphothreonine modification is found at Thr79. 2 positions are modified to N6-acetyllysine; alternate: Lys80 and Lys86. Lys80 and Lys86 each carry N6-succinyllysine; alternate. Lys99 is modified (N6-acetyllysine).

It belongs to the GroES chaperonin family. In terms of assembly, homoheptamer arranged in a ring structure. 2 heptameric Hsp10 rings interact with a Hsp60 tetradecamer in the structure of a back-to-back double heptameric ring to form the symmetrical football complex.

The protein resides in the mitochondrion matrix. Functionally, co-chaperonin implicated in mitochondrial protein import and macromolecular assembly. Together with Hsp60, facilitates the correct folding of imported proteins. May also prevent misfolding and promote the refolding and proper assembly of unfolded polypeptides generated under stress conditions in the mitochondrial matrix. The functional units of these chaperonins consist of heptameric rings of the large subunit Hsp60, which function as a back-to-back double ring. In a cyclic reaction, Hsp60 ring complexes bind one unfolded substrate protein per ring, followed by the binding of ATP and association with 2 heptameric rings of the co-chaperonin Hsp10. This leads to sequestration of the substrate protein in the inner cavity of Hsp60 where, for a certain period of time, it can fold undisturbed by other cell components. Synchronous hydrolysis of ATP in all Hsp60 subunits results in the dissociation of the chaperonin rings and the release of ADP and the folded substrate protein. The sequence is that of 10 kDa heat shock protein, mitochondrial (Hspe1) from Mus musculus (Mouse).